We begin with the raw amino-acid sequence, 157 residues long: Small ribosomal subunit protein uS17 (157 aa).

This sequence belongs to the universal ribosomal protein uS17 family.

This Dunaliella tertiolecta (Green alga) protein is Small ribosomal subunit protein uS17 (RPS11).